The sequence spans 662 residues: Translation factor guf1, mitochondrial (662 aa).

Residues 1–42 (MRGCLQLARWLSAAPNWPASSLLKAPGSSFATRLFTTTSSYK) constitute a mitochondrion transit peptide. The region spanning 64-244 (ERYRNFCIVA…TVVEKIPAPI (181 aa)) is the tr-type G domain. GTP-binding positions include 73–80 (AHVDHGKS), 137–141 (DTPGH), and 191–194 (NKVD).

The protein belongs to the TRAFAC class translation factor GTPase superfamily. Classic translation factor GTPase family. LepA subfamily.

The protein resides in the mitochondrion inner membrane. The enzyme catalyses GTP + H2O = GDP + phosphate + H(+). Its function is as follows. Promotes mitochondrial protein synthesis. May act as a fidelity factor of the translation reaction, by catalyzing a one-codon backward translocation of tRNAs on improperly translocated ribosomes. Binds to mitochondrial ribosomes in a GTP-dependent manner. This chain is Translation factor guf1, mitochondrial (guf1), found in Emericella nidulans (strain FGSC A4 / ATCC 38163 / CBS 112.46 / NRRL 194 / M139) (Aspergillus nidulans).